The chain runs to 504 residues: Flavin-dependent halogenase armH3 (504 aa).

FAD contacts are provided by Gly-16, Ala-19, Glu-49, and Ala-149. Chloride is bound by residues Ser-329 and Gly-330. Residue Ile-331 coordinates FAD. The disordered stretch occupies residues 444–475 (NNLRTPVDTGAADVKAKHAPSETDAQNPLQSM).

It belongs to the flavin-dependent halogenase family.

It carries out the reaction melleolide F + FADH2 + chloride + O2 = 6'-chloromelleolide F + FAD + 2 H2O + H(+). In terms of biological role, flavin-dependent halogenase involved in the biosynthesis of melleolides, a range of antifungal and phytotoxic polyketide derivatives composed of an orsellinic acid (OA) moiety esterified to various sesquiterpene alcohols. The halogenase catalyzes the transfer of a single chlorine atom to the melleolide backbone, resulting in a 6'-chloromelleolide product. The enzyme acts on free substrate and does not depend on carrier-protein-dependent acceptor molecules. This Armillaria mellea (Honey mushroom) protein is Flavin-dependent halogenase armH3.